The sequence spans 334 residues: Cytoskeleton protein RodZ (334 aa).

Residues 1-111 (MNTEATHDQN…LGKRRKKRDG (111 aa)) lie on the Cytoplasmic side of the membrane. The region spanning 19 to 71 (LRNAREQLGLSQQAVAERLCLKVSTVRDIEEDKAPSDLASTFLRGYIRSYARL) is the HTH cro/C1-type domain. The H-T-H motif DNA-binding region spans 30 to 49 (QQAVAERLCLKVSTVRDIEE). The helical; Signal-anchor for type II membrane protein transmembrane segment at 112–132 (WLMSFTWLVLFVVVGLTGAWW) threads the bilayer. Over 133 to 334 (WQNHKAQQEE…TLNAEPTPAQ (202 aa)) the chain is Periplasmic. The tract at residues 155–241 (NADKDSGQSV…PSALPTSQAG (87 aa)) is disordered. A compositionally biased stretch (polar residues) spans 161-175 (GQSVPLDTGAVTSQD). 2 stretches are compositionally biased toward low complexity: residues 176–211 (TTPA…TVVA) and 219–241 (TAAT…SQAG).

The protein belongs to the RodZ family.

The protein resides in the cell inner membrane. Its function is as follows. Cytoskeletal protein that is involved in cell-shape control through regulation of the length of the long axis. This Salmonella dublin (strain CT_02021853) protein is Cytoskeleton protein RodZ.